A 217-amino-acid chain; its full sequence is Probable transaldolase (217 aa).

Lysine 85 serves as the catalytic Schiff-base intermediate with substrate.

The protein belongs to the transaldolase family. Type 3B subfamily.

It localises to the cytoplasm. The enzyme catalyses D-sedoheptulose 7-phosphate + D-glyceraldehyde 3-phosphate = D-erythrose 4-phosphate + beta-D-fructose 6-phosphate. The protein operates within carbohydrate degradation; pentose phosphate pathway; D-glyceraldehyde 3-phosphate and beta-D-fructose 6-phosphate from D-ribose 5-phosphate and D-xylulose 5-phosphate (non-oxidative stage): step 2/3. In terms of biological role, transaldolase is important for the balance of metabolites in the pentose-phosphate pathway. This chain is Probable transaldolase, found in Brachyspira hyodysenteriae (strain ATCC 49526 / WA1).